The sequence spans 259 residues: DNA repair protein RecO (259 aa).

Belongs to the RecO family.

Involved in DNA repair and RecF pathway recombination. The protein is DNA repair protein RecO of Leuconostoc mesenteroides subsp. mesenteroides (strain ATCC 8293 / DSM 20343 / BCRC 11652 / CCM 1803 / JCM 6124 / NCDO 523 / NBRC 100496 / NCIMB 8023 / NCTC 12954 / NRRL B-1118 / 37Y).